A 212-amino-acid chain; its full sequence is Pyridoxine/pyridoxamine 5'-phosphate oxidase (212 aa).

Residues 59–64, 74–75, Lys-81, and Gln-103 each bind FMN; these read RMVLMK and YS. Lys-64 is a binding site for substrate. Tyr-121 and Arg-125 together coordinate substrate. Residues 138 to 139 and Trp-183 each bind FMN; that span reads QS. Position 189-191 (189-191) interacts with substrate; the sequence is RLH. Arg-193 provides a ligand contact to FMN.

It belongs to the pyridoxamine 5'-phosphate oxidase family. As to quaternary structure, homodimer. Requires FMN as cofactor.

It catalyses the reaction pyridoxamine 5'-phosphate + O2 + H2O = pyridoxal 5'-phosphate + H2O2 + NH4(+). The catalysed reaction is pyridoxine 5'-phosphate + O2 = pyridoxal 5'-phosphate + H2O2. The protein operates within cofactor metabolism; pyridoxal 5'-phosphate salvage; pyridoxal 5'-phosphate from pyridoxamine 5'-phosphate: step 1/1. Its pathway is cofactor metabolism; pyridoxal 5'-phosphate salvage; pyridoxal 5'-phosphate from pyridoxine 5'-phosphate: step 1/1. In terms of biological role, catalyzes the oxidation of either pyridoxine 5'-phosphate (PNP) or pyridoxamine 5'-phosphate (PMP) into pyridoxal 5'-phosphate (PLP). This is Pyridoxine/pyridoxamine 5'-phosphate oxidase from Rhodopseudomonas palustris (strain BisB5).